A 775-amino-acid chain; its full sequence is E3 ubiquitin-protein ligase ICP0 (775 aa).

Residues 1–112 form a disordered region; it reads MEPRPGASTR…PPREDGGSDE (112 aa). Basic and acidic residues-rich tracts occupy residues 10-21 and 45-57; these read RRPEGRPQREPA and VGGR…HDDD. Residues 58 to 69 show a composition bias toward acidic residues; sequence SASEADSTDTEL. A Phosphothreonine; by host; by CK1 modification is found at T67. Residues 116 to 157 form an RING-type zinc finger; sequence CAVCTDEIAPHLRCDTFPCMHRFCIPCMKTWMQLRNTCPLCN. The tract at residues 221 to 636 is disordered; it reads RALSPTHPEP…HAETSGAVPA (416 aa). Residues 231-243 are compositionally biased toward acidic residues; the sequence is TTDEDDDDLDDAD. Positions 258-284 are enriched in low complexity; the sequence is RRGAAAPPVTGGASHAAPQPAAARTAP. The span at 293 to 302 shows a compositional bias: polar residues; that stretch reads GSSNTNTTTN. Positions 310 to 321 are enriched in low complexity; sequence RQSRAAAPRGAS. Positions 322-331 are enriched in gly residues; that stretch reads GPSGGVGVGV. Residues 369–390 are compositionally biased toward pro residues; it reads PASPHRPPAAPMPGSAPRPGPP. A compositionally biased stretch (low complexity) spans 391 to 409; the sequence is ASAAASGPARPRAAVAPCV. The span at 410–421 shows a compositional bias: pro residues; sequence RAPPPGPGPRAP. Low complexity predominate over residues 422-431; sequence APGAEPAARP. Positions 439–453 are enriched in polar residues; it reads QSHSSLAQAANQEQS. Positions 464 to 476 are enriched in gly residues; sequence GSGGPGVEGGHGP. A compositionally biased stretch (low complexity) spans 477–493; sequence SRGAAPSGAAPLPSAAS. A compositionally biased stretch (polar residues) spans 509 to 519; sequence GQENPSPQSTR. Over residues 539-549 the composition is skewed to gly residues; the sequence is GPGGRGQGGPG. Positions 550-592 are enriched in low complexity; the sequence is TPLTSSAASASSSSASSSSAPTPAGAASSAAGAASSSASASSG. Over residues 617–626 the composition is skewed to basic residues; the sequence is GPRKCARKTR.

The protein belongs to the simplexviruses ICp0 family. In terms of assembly, interacts directly with human RCOR1/CoREST protein, leading to the disruption of the human BHC corepressor complex. Interacts with human CENPA, leading to its degradation. Interacts with human USP7; this interaction modulates ICP0 stability. Interacts with human CDC34. Interacts (when phosphorylated) with human RNF8 (via FHA domain). Interacts with human TRIM27. Interacts with human ZBP1. Interacts with host MORC3; this interaction promotes the degradation of host MORC3. In terms of processing, phosphorylated at Thr-67, leading to promote interaction with host RNF8. Phosphorylated by host CHEK2; leading to increased SUMO-targeted ubiquitin ligase activity of ICP0. Post-translationally, auto-ubiquitinated. Deubiquitinated by host USP7; leading to stabilize it.

The protein resides in the host cytoplasm. It localises to the host nucleus. It catalyses the reaction S-ubiquitinyl-[E2 ubiquitin-conjugating enzyme]-L-cysteine + [acceptor protein]-L-lysine = [E2 ubiquitin-conjugating enzyme]-L-cysteine + N(6)-ubiquitinyl-[acceptor protein]-L-lysine.. In terms of biological role, SUMO-targeted ubiquitin ligase that plays an essential role in nuclear antiviral defense evasion triggered by dsDNA viruses. Acts during the initial stages of lytic infection and the reactivation of latent viral genome. Prevents the antiviral effect of nuclear bodies by degrading host PML, SP100 and MORC3. Prevents antiviral response to viral DNA induced by IFI16 by degrading it. Additionally, inhibits host IRF3 nuclear signaling to prevent interferon production by the infected cells. Interestingly, the E3 ubiquitin ligase activity associated with the RING finger domain does not seem to be directly required to inhibit the activation of IRF3 but instead plays a critical role in modulating the cellular localization of ICP0. Upon reactivation of latent genome, suppresses the silencing of viral DNA by dissociating either HDAC1 or HDAC2 from the HDAC-RCOR1-REST-KDM1A complex localized at the ND10 structures and causes their dispersal. Two cellular histone ubiquitin ligases RNF8 and RNF168 are also targeted by ICP0 for degradation, leading to a loss of ubiquitinated forms of H2A, a relief of transcriptional repression, and the activation of latent viral genomes. Enhances the localization of host CCND3 to ND10 bodies that serve as precursors of replication compartments to enable efficient viral replication. Like many RING-finger E3 ubiquitin ligases, ICP0 can induce its own ubiquitination, an activity that promotes its instability due to its targeting to the 26S proteasome for degradation. ICP0 restricts this process by recruiting the cellular ubiquitin-specific protease USP7 that cleaves the anchored ubiquitin chains from ICP0, thereby promoting its stabilization. The sequence is that of E3 ubiquitin-protein ligase ICP0 (ICP0) from Homo sapiens (Human).